A 134-amino-acid polypeptide reads, in one-letter code: Late embryogenesis abundant protein 6 (134 aa).

Positions 31-45 (ERAMARTKEEKEIAH) are enriched in basic and acidic residues. 2 disordered regions span residues 31-53 (ERAM…AKEA) and 80-134 (VTDH…HHHY). A coiled-coil region spans residues 34 to 70 (MARTKEEKEIAHQRRKAKEAEANMDMHMAKAAHAEDK). Residues 115 to 127 (PPQTYHPTYPPTG) show a composition bias toward low complexity.

Belongs to the LEA type 1 family.

In terms of biological role, involved dehydration tolerance. Involved in the adaptive response of vascular plants to withstand water deficit. May possess chaperone-like activity under water deficit. The sequence is that of Late embryogenesis abundant protein 6 from Arabidopsis thaliana (Mouse-ear cress).